A 497-amino-acid polypeptide reads, in one-letter code: Actin-binding protein WASF2 (497 aa).

Disordered regions lie at residues 173–203 (KEKR…KEEW) and 239–436 (ENVD…SDAR). Over residues 252–263 (SDSASSPSPSFS) the composition is skewed to low complexity. Composition is skewed to pro residues over residues 298-335 (SHPP…PPLP) and 343-403 (GTPP…PPLP). Positions 435–452 (ARSDLLSAIRQGFQLRRV) constitute a WH2 domain. A Phosphoserine modification is found at Ser-473.

Belongs to the SCAR/WAVE family. In terms of assembly, binds actin and the Arp2/3 complex. Interacts with BAIAP2. Component of the WAVE2 complex composed of ABI1, CYFIP1/SRA1, NCKAP1/NAP1 (NCKAP1l/HEM1 in hematopoietic cells) and WASF2/WAVE2. Directly interacts with BRK1. Interacts with human cytomegalovirus protein UL135. Interacts with FNBP1L (via the SH3 domain).

The protein resides in the cytoplasm. It is found in the cytoskeleton. It localises to the cell projection. The protein localises to the lamellipodium. Its subcellular location is the basolateral cell membrane. Downstream effector molecule involved in the transmission of signals from tyrosine kinase receptors and small GTPases to the actin cytoskeleton. Promotes formation of actin filaments. Part of the WAVE complex that regulates lamellipodia formation. The WAVE complex regulates actin filament reorganization via its interaction with the Arp2/3 complex. This Mus musculus (Mouse) protein is Actin-binding protein WASF2.